We begin with the raw amino-acid sequence, 461 residues long: Probable ribonuclease FAU-1 (461 aa).

One can recognise an S1 motif domain in the interval 89-158 (GAVFYGEVTE…ARPSLATALR (70 aa)).

This sequence belongs to the FAU-1 family.

In terms of biological role, probable RNase involved in rRNA stability through maturation and/or degradation of precursor rRNAs. Binds to RNA in loop regions with AU-rich sequences. The polypeptide is Probable ribonuclease FAU-1 (Natronomonas pharaonis (strain ATCC 35678 / DSM 2160 / CIP 103997 / JCM 8858 / NBRC 14720 / NCIMB 2260 / Gabara) (Halobacterium pharaonis)).